The primary structure comprises 113 residues: Hydrogenase maturation factor HypA (113 aa).

Position 2 (histidine 2) interacts with Ni(2+). 4 residues coordinate Zn(2+): cysteine 73, cysteine 76, cysteine 89, and cysteine 92.

This sequence belongs to the HypA/HybF family.

Involved in the maturation of [NiFe] hydrogenases. Required for nickel insertion into the metal center of the hydrogenase. This is Hydrogenase maturation factor HypA from Rhodopseudomonas palustris (strain BisB5).